Reading from the N-terminus, the 183-residue chain is MKGKITLFFTALCFGLTGCIAPPKGLEKERFSINSYREISPQDLTCHCKTVRLGGKIVNTTVLANQTKIEVLSLPVSSISAKPFVELQSDGRFIVYFNGFVEPENLKERYITVGGQLAGTEKGKIEQADYTYPVVQADKYRIWTLSTTYDYPTDDWDEDDDWGFFRWRHRLWYVQPEIHYYLN.

Residues 7–23 (LFFTALCFGLTGCIAPP) traverse the membrane as a helical segment.

The protein localises to the membrane. This is an uncharacterized protein from Haemophilus influenzae (strain ATCC 51907 / DSM 11121 / KW20 / Rd).